A 219-amino-acid polypeptide reads, in one-letter code: MESQEPTESSQNGKQYIISEELISEGKWVKLEKTTYMDPTGKTRTWESVKRTTRKEQTADGVAVIPVLQRTLHYECIVLVKQFRPPMGGYCIEFPAGLIDDGETPEAAALRELEEETGYKGDIAECSPAVCMDPGLSNCTIHIVTVTINGDDAENARPKPKPGDGEFVEVISLPKNDLLQRLDALVAEEHLTVDARVYSYALALKHANAKPFEVPFLKF.

M1 carries the post-translational modification N-acetylmethionine. Phosphoserine occurs at positions 3 and 10. Substrate is bound at residue W28. K42 participates in a covalent cross-link: Glycyl lysine isopeptide (Lys-Gly) (interchain with G-Cter in SUMO2). T45 bears the Phosphothreonine mark. Residues 46–47 and R51 contribute to the substrate site; that span reads WE. The Nudix hydrolase domain occupies 57–197; sequence QTADGVAVIP…EEHLTVDARV (141 aa). Residue Y74 is modified to Phosphotyrosine. R84 is a binding site for substrate. A96 is a Mg(2+) binding site. The Nudix box motif lies at 97 to 118; the sequence is GLIDDGETPEAAALRELEEETG. Substrate is bound at residue L98. Mg(2+) is bound by residues E112 and E116. D133 contacts substrate. E166 lines the Mg(2+) pocket. 2 positions are modified to N6-acetyllysine: K210 and K218.

Belongs to the Nudix hydrolase family. Homodimer. Interacts with PARG. Mg(2+) serves as cofactor. Phosphorylation at Thr-45 is required for homodimer stability; dephosphorylation results in destabilization of the homodimer. Dephosphorylation at Thr-45 promotes the ATP-synthesis activity. Widely expressed. Most abundant in liver.

The protein resides in the nucleus. The enzyme catalyses D-ribose 5-phosphate + ATP + H(+) = ADP-D-ribose + diphosphate. It catalyses the reaction ADP-D-ribose + H2O = D-ribose 5-phosphate + AMP + 2 H(+). The catalysed reaction is 8-oxo-dGDP + H2O = 8-oxo-dGMP + phosphate + H(+). In terms of biological role, enzyme that can either act as an ADP-sugar pyrophosphatase in absence of diphosphate or catalyze the synthesis of ATP in presence of diphosphate. In absence of diphosphate, hydrolyzes with similar activities various modified nucleoside diphosphates such as ADP-ribose, ADP-mannose, ADP-glucose, 8-oxo-GDP and 8-oxo-dGDP. Can also hydrolyze other nucleotide sugars with low activity. In presence of diphosphate, mediates the synthesis of ATP in the nucleus by catalyzing the conversion of ADP-ribose to ATP and ribose 5-phosphate. Nuclear ATP synthesis takes place when dephosphorylated at Thr-45. Nuclear ATP generation is required for extensive chromatin remodeling events that are energy-consuming. Does not play a role in U8 snoRNA decapping activity. Binds U8 snoRNA. In Homo sapiens (Human), this protein is ADP-sugar pyrophosphatase (NUDT5).